Consider the following 249-residue polypeptide: Methylthioribulose-1-phosphate dehydratase (249 aa).

C102 lines the substrate pocket. Zn(2+) contacts are provided by H120 and H122. E148 serves as the catalytic Proton donor/acceptor. H205 is a Zn(2+) binding site.

Belongs to the aldolase class II family. MtnB subfamily. Requires Zn(2+) as cofactor.

Its subcellular location is the cytoplasm. The enzyme catalyses 5-(methylsulfanyl)-D-ribulose 1-phosphate = 5-methylsulfanyl-2,3-dioxopentyl phosphate + H2O. It functions in the pathway amino-acid biosynthesis; L-methionine biosynthesis via salvage pathway; L-methionine from S-methyl-5-thio-alpha-D-ribose 1-phosphate: step 2/6. Its function is as follows. Catalyzes the dehydration of methylthioribulose-1-phosphate (MTRu-1-P) into 2,3-diketo-5-methylthiopentyl-1-phosphate (DK-MTP-1-P). The protein is Methylthioribulose-1-phosphate dehydratase of Botryotinia fuckeliana (strain B05.10) (Noble rot fungus).